The primary structure comprises 190 residues: Endoribonuclease YbeY (190 aa).

The segment at 1–25 (MSQPRPGHRPDCNGADPDSNFASMT) is disordered. Positions 147, 151, and 157 each coordinate Zn(2+).

Belongs to the endoribonuclease YbeY family. The cofactor is Zn(2+).

It localises to the cytoplasm. In terms of biological role, single strand-specific metallo-endoribonuclease involved in late-stage 70S ribosome quality control and in maturation of the 3' terminus of the 16S rRNA. This Rhodopseudomonas palustris (strain ATCC BAA-98 / CGA009) protein is Endoribonuclease YbeY.